The sequence spans 547 residues: Chaperonin GroEL 1 (547 aa).

ATP is bound by residues 30–33, K51, 87–91, G415, 479–481, and D495; these read TLGP, DGTTT, and NAA.

The protein belongs to the chaperonin (HSP60) family. As to quaternary structure, forms a cylinder of 14 subunits composed of two heptameric rings stacked back-to-back. Interacts with the co-chaperonin GroES.

The protein resides in the cytoplasm. It catalyses the reaction ATP + H2O + a folded polypeptide = ADP + phosphate + an unfolded polypeptide.. Functionally, together with its co-chaperonin GroES, plays an essential role in assisting protein folding. The GroEL-GroES system forms a nano-cage that allows encapsulation of the non-native substrate proteins and provides a physical environment optimized to promote and accelerate protein folding. The sequence is that of Chaperonin GroEL 1 from Vibrio parahaemolyticus serotype O3:K6 (strain RIMD 2210633).